The primary structure comprises 468 residues: 6-phospho-beta-galactosidase (468 aa).

D-galactose 6-phosphate is bound by residues Gln-19, His-116, Asn-159, Glu-160, and Asn-297. Glu-160 serves as the catalytic Proton donor. Residue Glu-375 is the Nucleophile of the active site. D-galactose 6-phosphate contacts are provided by Ser-428, Trp-429, Lys-435, and Tyr-437.

It belongs to the glycosyl hydrolase 1 family.

It catalyses the reaction a 6-phospho-beta-D-galactoside + H2O = D-galactose 6-phosphate + an alcohol. It participates in carbohydrate metabolism; lactose degradation; D-galactose 6-phosphate and beta-D-glucose from lactose 6-phosphate: step 1/1. The chain is 6-phospho-beta-galactosidase from Streptococcus agalactiae serotype III (strain NEM316).